Reading from the N-terminus, the 259-residue chain is Thiazole synthase (259 aa).

The active-site Schiff-base intermediate with DXP is the lysine 99. Residues glycine 160, 187–188 (AG), and 209–210 (NT) contribute to the 1-deoxy-D-xylulose 5-phosphate site.

It belongs to the ThiG family. As to quaternary structure, homotetramer. Forms heterodimers with either ThiH or ThiS.

It localises to the cytoplasm. It carries out the reaction [ThiS sulfur-carrier protein]-C-terminal-Gly-aminoethanethioate + 2-iminoacetate + 1-deoxy-D-xylulose 5-phosphate = [ThiS sulfur-carrier protein]-C-terminal Gly-Gly + 2-[(2R,5Z)-2-carboxy-4-methylthiazol-5(2H)-ylidene]ethyl phosphate + 2 H2O + H(+). It participates in cofactor biosynthesis; thiamine diphosphate biosynthesis. Catalyzes the rearrangement of 1-deoxy-D-xylulose 5-phosphate (DXP) to produce the thiazole phosphate moiety of thiamine. Sulfur is provided by the thiocarboxylate moiety of the carrier protein ThiS. In vitro, sulfur can be provided by H(2)S. This is Thiazole synthase from Solibacter usitatus (strain Ellin6076).